The sequence spans 404 residues: MAKEKIVLAYSGGLDTSVAIQWLVESGYEVIACCLDVGEGKNLDFIKEKAITVGASESYTIDAKEEFAEDFALIALQAHAYYEGKYPLISALSRPLIAKKLVEVARQEGASAIAHGCTGKGNDQVRFEVAIHALAPDLKVVSPVRDWKWSREEEINYAKEHDIPVPIDLDNPFSIDQNLWGRSNECGVLENPWTTPPEAAYDLTVSLEDAPDTADIVEITFDAGIPISLNGENMSLANLILTLNEIAGKHGVGRIDHIENRLVGIKSREVYECPAAVTLITAHKELEDLTFVREVAHFKPIIEQKISETIYNGLWFSPLTEALVAFLKSTQKFVNGTIRVKLFKGHAIVEGRKSPNSLYDENLATYTSSDTFDQDAAVGFIKLWGLPTKVNAEVNSKVTITTEV.

9 to 17 is a binding site for ATP; the sequence is AYSGGLDTS. Residue Tyr-86 coordinates L-citrulline. Gly-116 provides a ligand contact to ATP. L-aspartate contacts are provided by Thr-118, Asn-122, and Asp-123. L-citrulline is bound at residue Asn-122. 5 residues coordinate L-citrulline: Arg-126, Ser-174, Ser-183, Glu-259, and Tyr-271.

Belongs to the argininosuccinate synthase family. Type 1 subfamily. In terms of assembly, homotetramer.

Its subcellular location is the cytoplasm. It carries out the reaction L-citrulline + L-aspartate + ATP = 2-(N(omega)-L-arginino)succinate + AMP + diphosphate + H(+). The protein operates within amino-acid biosynthesis; L-arginine biosynthesis; L-arginine from L-ornithine and carbamoyl phosphate: step 2/3. The chain is Argininosuccinate synthase from Listeria monocytogenes serovar 1/2a (strain ATCC BAA-679 / EGD-e).